Here is a 343-residue protein sequence, read N- to C-terminus: Ketol-acid reductoisomerase (NADP(+)) (343 aa).

The 180-residue stretch at 7-186 (TTVYYDEDAD…GCTRAGVIET (180 aa)) folds into the KARI N-terminal Rossmann domain. NADP(+)-binding positions include 30-33 (YGSQ), Arg53, Ser56, Ser58, and 88-91 (DTIQ). His112 is an active-site residue. Gly138 provides a ligand contact to NADP(+). The region spanning 187-329 (SFQEEVETDL…ENLRELFAWG (143 aa)) is the KARI C-terminal knotted domain. Mg(2+)-binding residues include Asp195, Glu199, Glu231, and Glu235. Ser256 is a substrate binding site.

This sequence belongs to the ketol-acid reductoisomerase family. Requires Mg(2+) as cofactor.

The enzyme catalyses (2R)-2,3-dihydroxy-3-methylbutanoate + NADP(+) = (2S)-2-acetolactate + NADPH + H(+). It carries out the reaction (2R,3R)-2,3-dihydroxy-3-methylpentanoate + NADP(+) = (S)-2-ethyl-2-hydroxy-3-oxobutanoate + NADPH + H(+). The protein operates within amino-acid biosynthesis; L-isoleucine biosynthesis; L-isoleucine from 2-oxobutanoate: step 2/4. Its pathway is amino-acid biosynthesis; L-valine biosynthesis; L-valine from pyruvate: step 2/4. In terms of biological role, involved in the biosynthesis of branched-chain amino acids (BCAA). Catalyzes an alkyl-migration followed by a ketol-acid reduction of (S)-2-acetolactate (S2AL) to yield (R)-2,3-dihydroxy-isovalerate. In the isomerase reaction, S2AL is rearranged via a Mg-dependent methyl migration to produce 3-hydroxy-3-methyl-2-ketobutyrate (HMKB). In the reductase reaction, this 2-ketoacid undergoes a metal-dependent reduction by NADPH to yield (R)-2,3-dihydroxy-isovalerate. The protein is Ketol-acid reductoisomerase (NADP(+)) of Haloarcula marismortui (strain ATCC 43049 / DSM 3752 / JCM 8966 / VKM B-1809) (Halobacterium marismortui).